The primary structure comprises 460 residues: Interleukin-6 receptor subunit alpha (460 aa).

The N-terminal stretch at 1–19 (MLTVGCTLLVALLAAPAVA) is a signal peptide. Residues 20–116 (LVLGSCRALE…DVPPEEPKLS (97 aa)) form the Ig-like C2-type domain. The Extracellular portion of the chain corresponds to 20 to 364 (LVLGSCRALE…VQESSSMSLP (345 aa)). 4 cysteine pairs are disulfide-bonded: Cys25–Cys190, Cys47–Cys92, Cys117–Cys128, and Cys162–Cys173. 2 N-linked (GlcNAc...) asparagine glycosylation sites follow: Asn32 and Asn55. 2 consecutive Fibronectin type-III domains span residues 109–214 (PPEE…VQPD) and 215–313 (PPAN…TPWI). N-linked (GlcNAc...) asparagine glycosylation occurs at Asn150. Residue Asn218 is glycosylated (N-linked (GlcNAc...) asparagine). Positions 300-304 (WSEWS) match the WSXWS motif motif. The chain crosses the membrane as a helical span at residues 365–385 (TFLVAGGSLAFGLLLCVFIIL). At 386-460 (RLKQKWKSEA…NSNRDYLFPR (75 aa)) the chain is on the cytoplasmic side.

This sequence belongs to the type I cytokine receptor family. Type 3 subfamily. In terms of assembly, component of a hexamer of two molecules each of IL6, IL6R and IL6ST; first binds to IL6 to associate with the signaling subunit IL6ST. Interacts (via N-terminal ectodomain) with SORL1; this interaction may affect IL6-binding to IL6R, hence decrease IL6 'classic-signaling'. As to quaternary structure, also interacts with SORL1; this interaction leads to soluble IL6R internalization. May form a trimeric complex with the soluble SORL1 ectodomain and circulating IL6 receptor; this interaction might stabilize circulating IL6, hence promote IL6 'trans-signaling'. In terms of processing, a short soluble form is also released from the membrane by proteolysis. The sIL6R is formed by limited proteolysis of membrane-bound receptors, a process referred to as ectodomain shedding. mIL6R is cleaved by the proteases ADAM10 and ADAM17. Glycosylated. Glycosylation is dispensable for transport, signaling, and cell-surface turnover. Glycosylation at Asn-55 is a protease-regulatory exosite. Glycosylation is required for ADAM17-mediated proteolysis. In terms of tissue distribution, expressed by dendritic cells. As to expression, detected in the cerebrospinal fluid.

It is found in the cell membrane. It localises to the secreted. With respect to regulation, classic and trans-signaling are both inhibited by tocilizumab, a humanized monoclonal antibody that blocks interleukin IL6R signaling. Part of the receptor for interleukin 6. Binds to IL6 with low affinity, but does not transduce a signal. Signal activation necessitate an association with IL6ST. Activation leads to the regulation of the immune response, acute-phase reactions and hematopoiesis. The interaction with membrane-bound IL6R and IL6ST stimulates 'classic signaling', the restricted expression of the IL6R limits classic IL6 signaling to only a few tissues such as the liver and some cells of the immune system. Whereas the binding of IL6 and soluble IL6R to IL6ST stimulates 'trans-signaling'. Alternatively, 'cluster signaling' occurs when membrane-bound IL6:IL6R complexes on transmitter cells activate IL6ST receptors on neighboring receiver cells. Its function is as follows. Signaling via the membrane-bound IL6R is mostly regenerative and anti-inflammatory. Drives naive CD4(+) T cells to the Th17 lineage, through 'cluster signaling' by dendritic cells. In terms of biological role, soluble form of IL6 receptor (sIL6R) that acts as an agonist of IL6 activity. The IL6:sIL6R complex (hyper-IL6) binds to IL6ST/gp130 on cell surfaces and induces signaling also on cells that do not express membrane-bound IL6R in a process called IL6 'trans-signaling'. sIL6R is causative for the pro-inflammatory properties of IL6 and an important player in the development of chronic inflammatory diseases. In complex with IL6, is required for induction of VEGF production. Plays a protective role during liver injury, being required for maintenance of tissue regeneration. 'Trans-signaling' in central nervous system regulates energy and glucose homeostasis. The chain is Interleukin-6 receptor subunit alpha from Mus musculus (Mouse).